Consider the following 222-residue polypeptide: MKPDIKICGLKTPEAIDRALKRGATHIGFIFFEKSPRYIEPDLAAKLAEPARGKAKIVAVVVDPTNDELDEIVSLLKPDILQLHGNESPEHVLTIKALYGLPVMKVFSVRTADDLKRVEAYIGIADRFLFDAKAPKGSELPGGNGISFDWSLLSWLDGSIDYMLSGGLNKNNVADALVKTRARGIDVSSGVETEPGVKSVAMIDEFFDAVETADAPVMAPGS.

The protein belongs to the TrpF family.

It carries out the reaction N-(5-phospho-beta-D-ribosyl)anthranilate = 1-(2-carboxyphenylamino)-1-deoxy-D-ribulose 5-phosphate. The protein operates within amino-acid biosynthesis; L-tryptophan biosynthesis; L-tryptophan from chorismate: step 3/5. The polypeptide is N-(5'-phosphoribosyl)anthranilate isomerase (Rhizobium etli (strain ATCC 51251 / DSM 11541 / JCM 21823 / NBRC 15573 / CFN 42)).